The chain runs to 224 residues: Cytidylate kinase (224 aa).

12–20 (GPAGAGKST) contacts ATP.

It belongs to the cytidylate kinase family. Type 1 subfamily.

The protein resides in the cytoplasm. It carries out the reaction CMP + ATP = CDP + ADP. The catalysed reaction is dCMP + ATP = dCDP + ADP. This Caldanaerobacter subterraneus subsp. tengcongensis (strain DSM 15242 / JCM 11007 / NBRC 100824 / MB4) (Thermoanaerobacter tengcongensis) protein is Cytidylate kinase.